The following is a 470-amino-acid chain: Acetyl-CoA decarbonylase/synthase complex subunit beta 2 (470 aa).

Cys189, Cys192, Cys278, and Cys280 together coordinate [Ni-Fe-S] cluster.

Belongs to the CdhC family. Monomer. The ACDS complex is made up of alpha, epsilon, beta, gamma and delta chains with a probable stoichiometry of (alpha(2)epsilon(2))(4)-beta(8)-(gamma(1)delta(1))(8) (Potential). [Ni-Fe-S] cluster serves as cofactor.

The catalysed reaction is Co(I)-[corrinoid Fe-S protein] + acetyl-CoA + H(+) = methyl-Co(III)-[corrinoid Fe-S protein] + CO + CoA. The protein operates within one-carbon metabolism; methanogenesis from acetate. Functionally, part of a complex that catalyzes the reversible cleavage of acetyl-CoA, allowing growth on acetate as sole source of carbon and energy. The alpha-epsilon complex generates CO from CO(2), while the beta subunit (this protein) combines the CO with CoA and a methyl group to form acetyl-CoA. The methyl group, which is incorporated into acetyl-CoA, is transferred to the beta subunit by a corrinoid iron-sulfur protein (the gamma-delta complex). In Methanosarcina acetivorans (strain ATCC 35395 / DSM 2834 / JCM 12185 / C2A), this protein is Acetyl-CoA decarbonylase/synthase complex subunit beta 2 (cdhC2).